Reading from the N-terminus, the 2120-residue chain is Alpha-tectorin (2120 aa).

The N-terminal stretch at Met-1–Ala-24 is a signal peptide. Residues Asn-34, Asn-215, Asn-258, Asn-277, Asn-445, and Asn-496 are each glycosylated (N-linked (GlcNAc...) asparagine). One can recognise an NIDO domain in the interval Pro-98–Arg-252. Positions Ser-260 to Cys-312 constitute a VWFC domain. Residues Thr-317–Ser-490 enclose the VWFD 1 domain. Cystine bridges form between Cys-319–Cys-451 and Cys-341–Cys-489. The TIL 1 domain occupies Pro-578–Ser-620. Residues Asn-666, Asn-792, Asn-822, Asn-834, Asn-877, Asn-899, Asn-907, and Asn-928 are each glycosylated (N-linked (GlcNAc...) asparagine). Positions Gly-690–Asn-865 constitute a VWFD 2 domain. An intrachain disulfide couples Cys-692 to Cys-828. Residues Cys-963–Cys-1013 enclose the TIL 2 domain. Residues Asn-1025, Asn-1041, Asn-1207, and Asn-1337 are each glycosylated (N-linked (GlcNAc...) asparagine). The VWFD 3 domain occupies Ala-1066–Arg-1250. 2 disulfide bridges follow: Cys-1068–Cys-1213 and Cys-1090–Cys-1249. Positions Cys-1345–Cys-1398 constitute a TIL 3 domain. One can recognise a VWFD 4 domain in the interval Ser-1458–Asn-1633. 7 cysteine pairs are disulfide-bonded: Cys-1460/Cys-1594, Cys-1482/Cys-1632, Cys-1684/Cys-1742, Cys-1708/Cys-1751, Cys-1753/Cys-1785, Cys-1773/Cys-1865, and Cys-1804/Cys-1824. N-linked (GlcNAc...) asparagine glycosylation is found at Asn-1511, Asn-1537, Asn-1723, Asn-1739, Asn-1761, Asn-1818, Asn-1831, Asn-1847, Asn-1887, and Asn-1906. One can recognise a ZP domain in the interval Thr-1772–His-2026. 3 cysteine pairs are disulfide-bonded: Cys-1947-Cys-2007, Cys-1968-Cys-2023, and Cys-2012-Cys-2019. Residue Asn-2058 is the site of GPI-anchor amidated asparagine attachment. A propeptide spans Gly-2059–Ser-2120 (removed in mature form).

In terms of assembly, may form homomeric filament after self-association or heteromeric filament after association with beta-tectorin. In terms of processing, at least 3 products of tectorin seem to exist: HMM, MMM and LMM. They may be generated by active processing or the result of proteolysis occurring between intrachain disulfide bonds. Post-translationally, the presence of a hydrophobic C-terminus preceded by a potential cleavage site strongly suggests that tectorins are synthesized as glycosylphosphatidylinositol-linked, membrane-bound precursors. Tectorins are targeted to the apical surface of the inner ear epithelia by the lipid and proteolytically released into the extracellular compartment. In terms of tissue distribution, expressed in the inner ear.

It is found in the cell membrane. The protein resides in the secreted. It localises to the extracellular space. The protein localises to the extracellular matrix. Functionally, one of the major non-collagenous components of the tectorial membrane. The tectorial membrane is an extracellular matrix of the inner ear that covers the neuroepithelium of the cochlea and contacts the stereocilia bundles of specialized sensory hair cells. Sound induces movement of these hair cells relative to the tectorial membrane, deflects the stereocilia and leads to fluctuations in hair-cell membrane potential, transducing sound into electrical signals. The protein is Alpha-tectorin (TECTA) of Gallus gallus (Chicken).